We begin with the raw amino-acid sequence, 97 residues long: Cobalt transport protein CbiN (97 aa).

Transmembrane regions (helical) follow at residues 6-26 (VLMILGVIILTLAPLIMYSGL) and 68-88 (SLLFALQAAIGALIIGYFFGY).

Belongs to the CbiN family. In terms of assembly, forms an energy-coupling factor (ECF) transporter complex composed of an ATP-binding protein (A component, CbiO), a transmembrane protein (T component, CbiQ) and 2 possible substrate-capture proteins (S components, CbiM and CbiN) of unknown stoichimetry.

The protein localises to the cell membrane. It participates in cofactor biosynthesis; adenosylcobalamin biosynthesis. Part of the energy-coupling factor (ECF) transporter complex CbiMNOQ involved in cobalt import. The polypeptide is Cobalt transport protein CbiN (Methanococcus maripaludis (strain C7 / ATCC BAA-1331)).